Reading from the N-terminus, the 676-residue chain is RNA helicase NPH-II (676 aa).

The region spanning 172–347 (FSAWISHRPV…VFLPNPAFIH (176 aa)) is the Helicase ATP-binding domain. 185 to 192 (GGTGVGKT) provides a ligand contact to ATP. Positions 296-299 (DEVH) match the DEXH box motif. The Helicase C-terminal domain occupies 366–542 (NPSSRMAYIE…KFNLTLPEDL (177 aa)).

The protein belongs to the DEAD box helicase family. DEAH subfamily. In terms of assembly, monomer.

It localises to the virion. It catalyses the reaction ATP + H2O = ADP + phosphate + H(+). In terms of biological role, NTP-dependent helicase that catalyzes unidirectional unwinding of 3'tailed duplex RNAs and plays an important role during transcription of early mRNAs, presumably by preventing R-loop formation behind the elongating RNA polymerase. Might also play a role in the export of newly synthesized mRNA chains out of the core into the cytoplasm. Required for replication and propagation of viral particles. This Homo sapiens (Human) protein is RNA helicase NPH-II (OPG084).